Reading from the N-terminus, the 261-residue chain is LIM and SH3 domain protein 1 (261 aa).

N-acetylmethionine is present on Met-1. Positions 5–56 (CARCGKIVYPTEKVNCLDKFWHKACFHCETCKMTLNMKNYKGYEKKPYCNAH) constitute an LIM zinc-binding domain. Lys-42 carries the post-translational modification N6-acetyllysine. Nebulin repeat units lie at residues 61–95 (SFTM…KNKG) and 97–131 (GFSV…KSRM). Thr-68 carries the phosphothreonine modification. Lys-75 bears the N6-methyllysine mark. A Phosphoserine modification is found at Ser-99. A Phosphothreonine modification is found at Thr-104. Residues 111-186 (KKTQDQISNI…QPVAQSYGGY (76 aa)) are disordered. Lys-112 carries the post-translational modification N6-succinyllysine. Ser-118 is modified (phosphoserine). The span at 121-130 (KYHEEFEKSR) shows a compositional bias: basic and acidic residues. 2 positions are modified to phosphoserine: Ser-134 and Ser-146. Residues 167–183 (SAPVYQQPQQQPVAQSY) show a composition bias toward low complexity. The 60-residue stretch at 202–261 (GGGKRYRAVYDYSAADEDEVSFQDGDTIVNVQQIDDGWMYGTVERTGDTGMLPANYVEAI) folds into the SH3 domain.

As to quaternary structure, interacts with F-actin. Interacts with ANKRD54. Interacts with KBTBD10.

It localises to the cytoplasm. It is found in the cell cortex. Its subcellular location is the cytoskeleton. Plays an important role in the regulation of dynamic actin-based, cytoskeletal activities. Agonist-dependent changes in LASP1 phosphorylation may also serve to regulate actin-associated ion transport activities, not only in the parietal cell but also in certain other F-actin-rich secretory epithelial cell types. The sequence is that of LIM and SH3 domain protein 1 (LASP1) from Homo sapiens (Human).